The primary structure comprises 351 residues: Histidinol-phosphate aminotransferase (351 aa).

N6-(pyridoxal phosphate)lysine is present on Lys221.

This sequence belongs to the class-II pyridoxal-phosphate-dependent aminotransferase family. Histidinol-phosphate aminotransferase subfamily. As to quaternary structure, homodimer. Pyridoxal 5'-phosphate is required as a cofactor.

It carries out the reaction L-histidinol phosphate + 2-oxoglutarate = 3-(imidazol-4-yl)-2-oxopropyl phosphate + L-glutamate. The protein operates within amino-acid biosynthesis; L-histidine biosynthesis; L-histidine from 5-phospho-alpha-D-ribose 1-diphosphate: step 7/9. This chain is Histidinol-phosphate aminotransferase, found in Staphylococcus epidermidis (strain ATCC 12228 / FDA PCI 1200).